Here is an 82-residue protein sequence, read N- to C-terminus: Small ribosomal subunit protein uS17 (82 aa).

This sequence belongs to the universal ribosomal protein uS17 family. Part of the 30S ribosomal subunit.

One of the primary rRNA binding proteins, it binds specifically to the 5'-end of 16S ribosomal RNA. This is Small ribosomal subunit protein uS17 from Ehrlichia ruminantium (strain Gardel).